The primary structure comprises 66 residues: Type 3 secretion system chaperone YscE (66 aa).

It belongs to the YscE family. As to quaternary structure, component of the heterodimeric YscE-YscG chaperone. The YscE-YscG chaperone forms a stable ternary complex with YscF/SctF.

Its subcellular location is the cytoplasm. Its function is as follows. Chaperone of the type III secretion system (T3SS), also called injectisome, which is used to inject bacterial effector proteins into eukaryotic host cells. Along with YscG, prevents premature polymerization of the YscF/SctF needle protein within the cytoplasm. Required for Yop secretion. The chain is Type 3 secretion system chaperone YscE from Yersinia enterocolitica.